Here is a 258-residue protein sequence, read N- to C-terminus: Thiazole synthase (258 aa).

The active-site Schiff-base intermediate with DXP is Lys-98. 1-deoxy-D-xylulose 5-phosphate-binding positions include Gly-159, 185-186 (AG), and 207-208 (NT).

It belongs to the ThiG family. In terms of assembly, homotetramer. Forms heterodimers with either ThiH or ThiS.

Its subcellular location is the cytoplasm. The enzyme catalyses [ThiS sulfur-carrier protein]-C-terminal-Gly-aminoethanethioate + 2-iminoacetate + 1-deoxy-D-xylulose 5-phosphate = [ThiS sulfur-carrier protein]-C-terminal Gly-Gly + 2-[(2R,5Z)-2-carboxy-4-methylthiazol-5(2H)-ylidene]ethyl phosphate + 2 H2O + H(+). Its pathway is cofactor biosynthesis; thiamine diphosphate biosynthesis. Its function is as follows. Catalyzes the rearrangement of 1-deoxy-D-xylulose 5-phosphate (DXP) to produce the thiazole phosphate moiety of thiamine. Sulfur is provided by the thiocarboxylate moiety of the carrier protein ThiS. In vitro, sulfur can be provided by H(2)S. The chain is Thiazole synthase from Cytophaga hutchinsonii (strain ATCC 33406 / DSM 1761 / CIP 103989 / NBRC 15051 / NCIMB 9469 / D465).